We begin with the raw amino-acid sequence, 316 residues long: 4-hydroxy-3-methylbut-2-enyl diphosphate reductase (316 aa).

Cysteine 12 lines the [4Fe-4S] cluster pocket. Residues histidine 43 and histidine 81 each coordinate (2E)-4-hydroxy-3-methylbut-2-enyl diphosphate. Dimethylallyl diphosphate is bound by residues histidine 43 and histidine 81. Residues histidine 43 and histidine 81 each contribute to the isopentenyl diphosphate site. Cysteine 103 serves as a coordination point for [4Fe-4S] cluster. Histidine 131 is a (2E)-4-hydroxy-3-methylbut-2-enyl diphosphate binding site. Histidine 131 is a dimethylallyl diphosphate binding site. Histidine 131 contacts isopentenyl diphosphate. Residue glutamate 133 is the Proton donor of the active site. A (2E)-4-hydroxy-3-methylbut-2-enyl diphosphate-binding site is contributed by threonine 170. Cysteine 198 contributes to the [4Fe-4S] cluster binding site. Residues serine 226, asparagine 228, and serine 271 each contribute to the (2E)-4-hydroxy-3-methylbut-2-enyl diphosphate site. Dimethylallyl diphosphate-binding residues include serine 226, asparagine 228, and serine 271. Isopentenyl diphosphate-binding residues include serine 226, asparagine 228, and serine 271.

Belongs to the IspH family. [4Fe-4S] cluster serves as cofactor.

The enzyme catalyses isopentenyl diphosphate + 2 oxidized [2Fe-2S]-[ferredoxin] + H2O = (2E)-4-hydroxy-3-methylbut-2-enyl diphosphate + 2 reduced [2Fe-2S]-[ferredoxin] + 2 H(+). The catalysed reaction is dimethylallyl diphosphate + 2 oxidized [2Fe-2S]-[ferredoxin] + H2O = (2E)-4-hydroxy-3-methylbut-2-enyl diphosphate + 2 reduced [2Fe-2S]-[ferredoxin] + 2 H(+). It participates in isoprenoid biosynthesis; dimethylallyl diphosphate biosynthesis; dimethylallyl diphosphate from (2E)-4-hydroxy-3-methylbutenyl diphosphate: step 1/1. Its pathway is isoprenoid biosynthesis; isopentenyl diphosphate biosynthesis via DXP pathway; isopentenyl diphosphate from 1-deoxy-D-xylulose 5-phosphate: step 6/6. Functionally, catalyzes the conversion of 1-hydroxy-2-methyl-2-(E)-butenyl 4-diphosphate (HMBPP) into a mixture of isopentenyl diphosphate (IPP) and dimethylallyl diphosphate (DMAPP). Acts in the terminal step of the DOXP/MEP pathway for isoprenoid precursor biosynthesis. This chain is 4-hydroxy-3-methylbut-2-enyl diphosphate reductase, found in Geobacillus kaustophilus (strain HTA426).